The sequence spans 83 residues: Phytosulfokines 4 (83 aa).

The N-terminal stretch at 1–28 (MAARTVAVAAALAVLLIFAASSATVAMA) is a signal peptide. A propeptide spanning residues 29–74 (GRPTPTTSLDEEAAQAAAQSEIGGGCKEGEGEEECLARRTLTAHTD) is cleaved from the precursor. 2 positions are modified to sulfotyrosine: tyrosine 75 and tyrosine 77. Positions 80–83 (QHHN) are excised as a propeptide.

Belongs to the phytosulfokine family. In terms of processing, sulfation is important for activity and for the binding to a putative membrane receptor. Post-translationally, PSK-alpha is produced by endopeptidase digestion. PSK-beta is produced from PSK-alpha by exopeptidase digestion.

The protein resides in the secreted. Promotes plant cell differentiation, organogenesis and somatic embryogenesis as well as cell proliferation. The protein is Phytosulfokines 4 (PSK4) of Oryza sativa subsp. japonica (Rice).